The primary structure comprises 346 residues: MMAGCGETDHSINMLPTNRKANESCSNTAPSLTVPECAICLQTCVHPVSLPCKHVFCYLCVKGASWLGKRCALCRQEIPEDFLDRPTLLSPELKAASRGNGEYAWYYEGRNGWWQYDERTSRELEDAFSKGKKSTEMLIAGFLYVADLENMVQYRRNEHGRRRKIKRDIIDIPKKGVAGLRLDCDANTVNLARESSADGADSVPAQSGASVQSSSVRPLTSVDGQLTSPATPSPDVGTSLEDSFAHLQLGGDSIAERSHRGEGEEEHESPSSGRVPAPDTSIEETESDASSDSEDVSALVAQHSLTQQRLLVPNPSQTVSDRSVAAGGIVSVRSRRPDGQCTVTEV.

Residues 37–75 form an RING-type zinc finger; the sequence is CAICLQTCVHPVSLPCKHVFCYLCVKGASWLGKRCALCR. A WWE domain is found at 91 to 167; it reads PELKAASRGN…EHGRRRKIKR (77 aa). 2 disordered regions span residues 195–240 and 256–301; these read SSAD…GTSL and ERSH…ALVA. A compositionally biased stretch (low complexity) spans 202 to 216; that stretch reads SVPAQSGASVQSSSV. A compositionally biased stretch (acidic residues) spans 281 to 295; the sequence is SIEETESDASSDSED.

As to quaternary structure, interacts with poly-ADP-ribosylated AXIN1, AXIN2, BLZF1 and CASC3. In terms of processing, ubiquitinated; autoubiquitinated. Autoubiquitination is enhanced upon poly(ADP-ribose)-binding.

It localises to the cytoplasm. It is found in the cytosol. The catalysed reaction is S-ubiquitinyl-[E2 ubiquitin-conjugating enzyme]-L-cysteine + [acceptor protein]-L-lysine = [E2 ubiquitin-conjugating enzyme]-L-cysteine + N(6)-ubiquitinyl-[acceptor protein]-L-lysine.. The protein operates within protein modification; protein ubiquitination. Its function is as follows. E3 ubiquitin-protein ligase that specifically binds poly-ADP-ribosylated proteins and mediates their ubiquitination and subsequent degradation. Acts as an activator of the Wnt signaling pathway by mediating the ubiquitination of poly-ADP-ribosylated AXIN1 and AXIN2, 2 key components of the beta-catenin destruction complex. Acts in cooperation with tankyrase proteins (TNKS and TNKS2), which mediate poly-ADP-ribosylation of target proteins AXIN1, AXIN2, BLZF1, CASC3, TNKS and TNKS2. Recognizes and binds tankyrase-dependent poly-ADP-ribosylated proteins via its WWE domain and mediates their ubiquitination. This Bos taurus (Bovine) protein is E3 ubiquitin-protein ligase RNF146-A (RNF146A).